A 324-amino-acid polypeptide reads, in one-letter code: Glyoxylate/hydroxypyruvate reductase B (324 aa).

Catalysis depends on residues R237 and E266. H285 functions as the Proton donor in the catalytic mechanism.

This sequence belongs to the D-isomer specific 2-hydroxyacid dehydrogenase family. GhrB subfamily. As to quaternary structure, homodimer.

Its subcellular location is the cytoplasm. It catalyses the reaction glycolate + NADP(+) = glyoxylate + NADPH + H(+). The enzyme catalyses (R)-glycerate + NAD(+) = 3-hydroxypyruvate + NADH + H(+). It carries out the reaction (R)-glycerate + NADP(+) = 3-hydroxypyruvate + NADPH + H(+). Its function is as follows. Catalyzes the NADPH-dependent reduction of glyoxylate and hydroxypyruvate into glycolate and glycerate, respectively. In Salmonella agona (strain SL483), this protein is Glyoxylate/hydroxypyruvate reductase B.